Here is a 392-residue protein sequence, read N- to C-terminus: Tropomodulin (392 aa).

Disordered stretches follow at residues Met1–Ser30, Asp59–Lys90, and Gln118–Gly138. Residues Ser16 to Pro29 are compositionally biased toward polar residues. Basic and acidic residues-rich tracts occupy residues Arg76–Lys90 and Lys122–Gly138.

This sequence belongs to the tropomodulin family. As to quaternary structure, binds to the N-terminus of actin.

The protein resides in the cytoplasm. Its subcellular location is the cytoskeleton. Its function is as follows. Acts as the pointed end capping protein which maintains the length and dynamics of the actin filament. Blocks the elongation and depolymerization of the actin filaments at the pointed end. The chain is Tropomodulin (unc-94) from Caenorhabditis elegans.